Consider the following 335-residue polypeptide: Beta-1,4-mannooligosaccharide phosphorylase (335 aa).

Belongs to the glycosyl hydrolase 130 family. In terms of assembly, homohexamer in solution.

The catalysed reaction is [(1-&gt;4)-beta-D-mannosyl](n) + phosphate = [(1-&gt;4)-beta-D-mannosyl](n-1) + alpha-D-mannose 1-phosphate. Functionally, catalyzes the phosphorolysis of beta-1,4-mannooligosaccharides to mannose 1-phosphate (Man1P) and shorter mannooligosaccharides. Can also catalyze the phosphorolysis of 4-O-beta-D-mannopyranosyl-D-glucopyranose (Man-Glc), but shows higher activity toward longer mannooligosaccharides. Involved in a mannan catabolic pathway which feeds into glycolysis. The chain is Beta-1,4-mannooligosaccharide phosphorylase from Ruminococcus albus (strain ATCC 27210 / DSM 20455 / JCM 14654 / NCDO 2250 / 7).